The sequence spans 214 residues: Redox-sensing transcriptional repressor Rex (214 aa).

Positions 17–56 (LYYRIFKRFHADQVEKASSKQIADAMGIDSATVRRDFSYF) form a DNA-binding region, H-T-H motif. An NAD(+)-binding site is contributed by 91–96 (GCGNIG).

Belongs to the transcriptional regulatory Rex family. As to quaternary structure, homodimer.

The protein resides in the cytoplasm. In terms of biological role, modulates transcription in response to changes in cellular NADH/NAD(+) redox state. The protein is Redox-sensing transcriptional repressor Rex of Streptococcus pyogenes serotype M4 (strain MGAS10750).